We begin with the raw amino-acid sequence, 276 residues long: Dermonecrotic toxin LlSicTox-alphaIV2ii (276 aa).

Histidine 5 is an active-site residue. The Mg(2+) site is built by glutamate 25 and aspartate 27. Residue histidine 41 is the Nucleophile of the active site. Cystine bridges form between cysteine 45/cysteine 51 and cysteine 47/cysteine 193. Aspartate 85 serves as a coordination point for Mg(2+).

The protein belongs to the arthropod phospholipase D family. Class II subfamily. Requires Mg(2+) as cofactor. As to expression, expressed by the venom gland.

It is found in the secreted. The enzyme catalyses an N-(acyl)-sphingosylphosphocholine = an N-(acyl)-sphingosyl-1,3-cyclic phosphate + choline. It catalyses the reaction an N-(acyl)-sphingosylphosphoethanolamine = an N-(acyl)-sphingosyl-1,3-cyclic phosphate + ethanolamine. The catalysed reaction is a 1-acyl-sn-glycero-3-phosphocholine = a 1-acyl-sn-glycero-2,3-cyclic phosphate + choline. It carries out the reaction a 1-acyl-sn-glycero-3-phosphoethanolamine = a 1-acyl-sn-glycero-2,3-cyclic phosphate + ethanolamine. Functionally, dermonecrotic toxins cleave the phosphodiester linkage between the phosphate and headgroup of certain phospholipids (sphingolipid and lysolipid substrates), forming an alcohol (often choline) and a cyclic phosphate. This toxin acts on sphingomyelin (SM). It may also act on ceramide phosphoethanolamine (CPE), lysophosphatidylcholine (LPC) and lysophosphatidylethanolamine (LPE), but not on lysophosphatidylserine (LPS), and lysophosphatidylglycerol (LPG). It acts by transphosphatidylation, releasing exclusively cyclic phosphate products as second products. Induces dermonecrosis, hemolysis, increased vascular permeability, edema, inflammatory response, and platelet aggregation. The sequence is that of Dermonecrotic toxin LlSicTox-alphaIV2ii from Loxosceles laeta (South American recluse spider).